A 205-amino-acid polypeptide reads, in one-letter code: MNVFDKYAEEYDKWFDENEIIYKSEIEALKRHIPKGRGLEIGVGTGRFAKPFNIKIGVDISKEMAKIAEKRGIKVIIAKGEDLPFKDEEFDFFLINTVLEFAENPKKMIEEAKRVLKRGGKIIIGIIDRDSFLGKMYEEKKQKSKFYKDANFLSAKEVIEMLKELGFKNIKATQTIFKEIDKVDKVEVKEGYGEGGFVAISAEKI.

It to M.jannaschii MJ0638 and MJ1252 and M.tuberculosis Rv2003c.

This is an uncharacterized protein from Methanocaldococcus jannaschii (strain ATCC 43067 / DSM 2661 / JAL-1 / JCM 10045 / NBRC 100440) (Methanococcus jannaschii).